The chain runs to 474 residues: Bifunctional protein HldE (474 aa).

Residues Met-1 to Glu-318 are ribokinase. Asn-194–Glu-197 serves as a coordination point for ATP. Residue Asp-263 is part of the active site. The tract at residues Phe-343–Glu-474 is cytidylyltransferase.

The protein in the N-terminal section; belongs to the carbohydrate kinase PfkB family. This sequence in the C-terminal section; belongs to the cytidylyltransferase family. In terms of assembly, homodimer.

The catalysed reaction is D-glycero-beta-D-manno-heptose 7-phosphate + ATP = D-glycero-beta-D-manno-heptose 1,7-bisphosphate + ADP + H(+). It carries out the reaction D-glycero-beta-D-manno-heptose 1-phosphate + ATP + H(+) = ADP-D-glycero-beta-D-manno-heptose + diphosphate. The protein operates within nucleotide-sugar biosynthesis; ADP-L-glycero-beta-D-manno-heptose biosynthesis; ADP-L-glycero-beta-D-manno-heptose from D-glycero-beta-D-manno-heptose 7-phosphate: step 1/4. Its pathway is nucleotide-sugar biosynthesis; ADP-L-glycero-beta-D-manno-heptose biosynthesis; ADP-L-glycero-beta-D-manno-heptose from D-glycero-beta-D-manno-heptose 7-phosphate: step 3/4. Functionally, catalyzes the phosphorylation of D-glycero-D-manno-heptose 7-phosphate at the C-1 position to selectively form D-glycero-beta-D-manno-heptose-1,7-bisphosphate. Its function is as follows. Catalyzes the ADP transfer from ATP to D-glycero-beta-D-manno-heptose 1-phosphate, yielding ADP-D-glycero-beta-D-manno-heptose. The chain is Bifunctional protein HldE from Pseudomonas fluorescens (strain Pf0-1).